A 534-amino-acid chain; its full sequence is Calcium-dependent protein kinase 18 (534 aa).

The disordered stretch occupies residues 1–49 (MGLCFSSPKATRRGTGSRNPNPDSPTQGKASEKVSNKNKKNTKKIQLRH). A lipid anchor (N-myristoyl glycine) is attached at Gly-2. Positions 14 to 29 (GTGSRNPNPDSPTQGK) are enriched in polar residues. The segment covering 36–47 (NKNKKNTKKIQL) has biased composition (basic residues). The Protein kinase domain maps to 71 to 331 (YTIGKLLGHG…AAQALSHSWV (261 aa)). Residues 77–85 (LGHGQFGFT) and Lys-100 each bind ATP. Asp-197 (proton acceptor) is an active-site residue. Ser-237 carries the post-translational modification Phosphoserine. The autoinhibitory domain stretch occupies residues 337–367 (ASEVPIDISVLNNMRQFVKFSRLKQIALRAL). 4 consecutive EF-hand domains span residues 374–409 (DELD…DVPW), 411–446 (LKDA…VNQL), 453–488 (KWQQ…KGSI), and 491–518 (LLEE…ASLK). Residues Asp-387, Asp-389, Asn-391, Ser-393, Glu-398, Asp-424, Asn-426, Asp-428, Glu-435, Asp-466, Asp-468, Asp-470, Glu-477, Asp-496, Asp-498, Asp-500, and Arg-502 each coordinate Ca(2+). A Phosphoserine modification is found at Ser-504. Glu-507 provides a ligand contact to Ca(2+).

Belongs to the protein kinase superfamily. Ser/Thr protein kinase family. CDPK subfamily.

The protein resides in the membrane. The enzyme catalyses L-seryl-[protein] + ATP = O-phospho-L-seryl-[protein] + ADP + H(+). It carries out the reaction L-threonyl-[protein] + ATP = O-phospho-L-threonyl-[protein] + ADP + H(+). Its activity is regulated as follows. Activated by calcium. Autophosphorylation may play an important role in the regulation of the kinase activity. Its function is as follows. May play a role in signal transduction pathways that involve calcium as a second messenger. The protein is Calcium-dependent protein kinase 18 (CPK18) of Arabidopsis thaliana (Mouse-ear cress).